Reading from the N-terminus, the 364-residue chain is Aminomethyltransferase (364 aa).

The protein belongs to the GcvT family. As to quaternary structure, the glycine cleavage system is composed of four proteins: P, T, L and H.

It catalyses the reaction N(6)-[(R)-S(8)-aminomethyldihydrolipoyl]-L-lysyl-[protein] + (6S)-5,6,7,8-tetrahydrofolate = N(6)-[(R)-dihydrolipoyl]-L-lysyl-[protein] + (6R)-5,10-methylene-5,6,7,8-tetrahydrofolate + NH4(+). The glycine cleavage system catalyzes the degradation of glycine. This chain is Aminomethyltransferase, found in Salmonella paratyphi A (strain AKU_12601).